A 500-amino-acid polypeptide reads, in one-letter code: Ent-kaurene oxidase P450-4 (500 aa).

A helical membrane pass occupies residues Val-6–Leu-26. N-linked (GlcNAc...) asparagine glycosylation is present at Asn-240. Cys-441 lines the heme pocket. A glycan (N-linked (GlcNAc...) asparagine) is linked at Asn-475.

The protein belongs to the cytochrome P450 family. Heme is required as a cofactor.

It localises to the membrane. The catalysed reaction is ent-kaur-16-ene + 3 reduced [NADPH--hemoprotein reductase] + 3 O2 = ent-kaur-16-en-19-oate + 3 oxidized [NADPH--hemoprotein reductase] + 4 H2O + 4 H(+). Its pathway is plant hormone biosynthesis; gibberellin biosynthesis. In terms of biological role, ent-kaurene oxidase; part of the gene cluster that mediates the biosynthesis of gibberellins (GAs), diterpenoids that may provide a selective advantage during infection of the preferred host plant, rice. Gibberellins (GAs) are diterpenoids and are synthesized via the mevalonate pathway. Biosynthesis of the major metabolite GA3 (gibberellic acid) from geranylgeranyl diphosphate (GGPP) requires 13 steps. The GGPP produced by the geranylgeranyl diphosphate synthase GGS2 is converted to ent-kaurene via ent-copalyldiphosphate in a two-step cyclization reaction performed by the bifunctional ent-copalyl diphosphate synthase/ent-kaurene synthase enzyme (CPS/KS). Ent-Kaurene is metabolized to GAs by a series of oxidation reactions catalyzed by cytochrome P450 monooxygenases. Cytochrome P450 monooxygenase P450-4 is an ent-kaurene oxidase that catalyzes the three oxidation steps between ent-kaurene and ent-kaurenoic acid. The highly multifunctional cytochrome P450 monooxygenase P450-1 then catalyzes four steps involving oxidation at two carbon atoms, in the main pathway from ent-kaurenoic acid to GA14 via GA12-aldehyde as well as producing kaurenolides and fujenoic acids as by-products. The cytochrome P450 monooxygenase P450-2 then converts GA14 to GA4 by removal of C-20. GA4 is further converted to GA7 by the GA4 desaturase DES via 1,2-desaturation before cytochrome P450 monooxygenase P450-3, a 13-hydroxylase, hydroxylates GA7 to GA3, the final product of the GA-biosynthetic pathway. The chain is Ent-kaurene oxidase P450-4 from Gibberella fujikuroi (strain CBS 195.34 / IMI 58289 / NRRL A-6831) (Bakanae and foot rot disease fungus).